Consider the following 94-residue polypeptide: NADH dehydrogenase [ubiquinone] iron-sulfur protein 3, mitochondrial (94 aa).

The protein belongs to the complex I 30 kDa subunit family. Core subunit of respiratory chain NADH dehydrogenase (Complex I) which is composed of 45 different subunits. Interacts with NDUFAF3. Interacts with RAB5IF. Found in subcomplexes containing subunits NDUFS2, MT-ND1 and NDUFA13.

It is found in the mitochondrion inner membrane. It catalyses the reaction a ubiquinone + NADH + 5 H(+)(in) = a ubiquinol + NAD(+) + 4 H(+)(out). Functionally, core subunit of the mitochondrial membrane respiratory chain NADH dehydrogenase (Complex I) which catalyzes electron transfer from NADH through the respiratory chain, using ubiquinone as an electron acceptor. Essential for the catalytic activity and assembly of complex I. In Mesocricetus auratus (Golden hamster), this protein is NADH dehydrogenase [ubiquinone] iron-sulfur protein 3, mitochondrial.